Reading from the N-terminus, the 252-residue chain is Nicotinamide/nicotinic acid mononucleotide adenylyltransferase 3 (252 aa).

NAD(+)-binding residues include Ser-14 and Phe-15. 2 residues coordinate ATP: His-22 and Lys-56. NAD(+) contacts are provided by Trp-90, Thr-93, Gly-135, and Asp-137. Lys-140 contributes to the ATP binding site. NAD(+) contacts are provided by Leu-147, Trp-148, Arg-167, and Asn-198. ATP is bound at residue Thr-203–Arg-206.

Belongs to the eukaryotic NMN adenylyltransferase family. As to quaternary structure, homotetramer. Mg(2+) is required as a cofactor. Expressed in lung and spleen with lower levels in placenta and kidney.

It localises to the mitochondrion. It carries out the reaction beta-nicotinamide D-ribonucleotide + ATP + H(+) = diphosphate + NAD(+). The catalysed reaction is nicotinate beta-D-ribonucleotide + ATP + H(+) = deamido-NAD(+) + diphosphate. It functions in the pathway cofactor biosynthesis; NAD(+) biosynthesis; NAD(+) from nicotinamide D-ribonucleotide: step 1/1. It participates in cofactor biosynthesis; NAD(+) biosynthesis; deamido-NAD(+) from nicotinate D-ribonucleotide: step 1/1. Its activity is regulated as follows. Activity is strongly inhibited by galotannin. Inhibited by P1-(adenosine-5')-P4-(nicotinic-acid-riboside-5')-tetraphosphate (Nap4AD). Catalyzes the formation of NAD(+) from nicotinamide mononucleotide (NMN) and ATP. Can also use the deamidated form; nicotinic acid mononucleotide (NaMN) as substrate with the same efficiency. Can use triazofurin monophosphate (TrMP) as substrate. Can also use GTP and ITP as nucleotide donors. Also catalyzes the reverse reaction, i.e. the pyrophosphorolytic cleavage of NAD(+). For the pyrophosphorolytic activity, can use NAD(+), NADH, NaAD, nicotinic acid adenine dinucleotide phosphate (NHD), nicotinamide guanine dinucleotide (NGD) as substrates. Fails to cleave phosphorylated dinucleotides NADP(+), NADPH and NaADP(+). Protects against axonal degeneration following injury. May be involved in the maintenance of axonal integrity. Also functions as a stress-response chaperone protein that prevents toxic aggregation of proteins; this function may be independent of its NAD(+) synthesis activity. In Homo sapiens (Human), this protein is Nicotinamide/nicotinic acid mononucleotide adenylyltransferase 3.